The primary structure comprises 366 residues: Beta sliding clamp (366 aa).

Residues 1-125 (MKFTVEREHL…FPNLDDWQSE (125 aa)) form an i region. Residues 126-253 (VEFTLPQATM…YRRVLPKNPD (128 aa)) form an II region. The tract at residues 254 to 366 (KHLEAGCDLL…AAYVVMPMRL (113 aa)) is III.

Belongs to the beta sliding clamp family. In terms of assembly, forms a ring-shaped head-to-tail homodimer around DNA which binds and tethers DNA polymerases and other proteins to the DNA. The DNA replisome complex has a single clamp-loading complex (3 tau and 1 each of delta, delta', psi and chi subunits) which binds 3 Pol III cores (1 core on the leading strand and 2 on the lagging strand) each with a beta sliding clamp dimer. Additional proteins in the replisome are other copies of gamma, psi and chi, Ssb, DNA helicase and RNA primase.

It is found in the cytoplasm. Confers DNA tethering and processivity to DNA polymerases and other proteins. Acts as a clamp, forming a ring around DNA (a reaction catalyzed by the clamp-loading complex) which diffuses in an ATP-independent manner freely and bidirectionally along dsDNA. Initially characterized for its ability to contact the catalytic subunit of DNA polymerase III (Pol III), a complex, multichain enzyme responsible for most of the replicative synthesis in bacteria; Pol III exhibits 3'-5' exonuclease proofreading activity. The beta chain is required for initiation of replication as well as for processivity of DNA replication. The sequence is that of Beta sliding clamp (dnaN) from Escherichia coli O157:H7.